The chain runs to 279 residues: Shikimate dehydrogenase (NADP(+)) (279 aa).

Residues 19 to 21 (SRS) and Thr-66 each bind shikimate. The active-site Proton acceptor is the Lys-70. Shikimate is bound by residues Asn-91 and Asp-106. NADP(+) is bound by residues 129 to 133 (GAGGA) and Phe-222. Tyr-224 contacts shikimate. Gly-243 lines the NADP(+) pocket.

It belongs to the shikimate dehydrogenase family. Homodimer.

The catalysed reaction is shikimate + NADP(+) = 3-dehydroshikimate + NADPH + H(+). The protein operates within metabolic intermediate biosynthesis; chorismate biosynthesis; chorismate from D-erythrose 4-phosphate and phosphoenolpyruvate: step 4/7. Its function is as follows. Involved in the biosynthesis of the chorismate, which leads to the biosynthesis of aromatic amino acids. Catalyzes the reversible NADPH linked reduction of 3-dehydroshikimate (DHSA) to yield shikimate (SA). This Anaeromyxobacter sp. (strain Fw109-5) protein is Shikimate dehydrogenase (NADP(+)).